Here is a 136-residue protein sequence, read N- to C-terminus: Putative pre-16S rRNA nuclease (136 aa).

It belongs to the YqgF nuclease family.

Its subcellular location is the cytoplasm. In terms of biological role, could be a nuclease involved in processing of the 5'-end of pre-16S rRNA. The polypeptide is Putative pre-16S rRNA nuclease (Francisella tularensis subsp. tularensis (strain FSC 198)).